We begin with the raw amino-acid sequence, 155 residues long: 3-hydroxyacyl-[acyl-carrier-protein] dehydratase FabZ (155 aa).

The active site involves His-58.

This sequence belongs to the thioester dehydratase family. FabZ subfamily.

Its subcellular location is the cytoplasm. It catalyses the reaction a (3R)-hydroxyacyl-[ACP] = a (2E)-enoyl-[ACP] + H2O. Involved in unsaturated fatty acids biosynthesis. Catalyzes the dehydration of short chain beta-hydroxyacyl-ACPs and long chain saturated and unsaturated beta-hydroxyacyl-ACPs. This chain is 3-hydroxyacyl-[acyl-carrier-protein] dehydratase FabZ, found in Rhizobium leguminosarum bv. trifolii (strain WSM2304).